Reading from the N-terminus, the 334-residue chain is Hemin transport system permease protein HmuU (334 aa).

The next 9 membrane-spanning stretches (helical) occupy residues 9-29 (LMLGFLLILLVILALGSANMG), 60-80 (LLAVVVGCALAVSGTIMQGLF), 96-116 (AALCVGLIIVMPFSLPPLLAL), 117-137 (YSHMVGAFIGSLAISTIIFTL), 149-169 (LLAGIAINALCGAAVGVLTYI), 191-211 (WSTLLVASSLILPTCILGLLQ), 244-264 (AILIGAAVAVSGVIGFIGLVV), 278-298 (WLLPGAALGGACLLLTADTLA), and 306-326 (EMPVGLLTSLLGGPYFLWLIL).

Belongs to the binding-protein-dependent transport system permease family. FecCD subfamily.

It is found in the cell inner membrane. Part of the binding-protein-dependent transport system for hemin; probably responsible for the translocation of the substrate across the membrane. The polypeptide is Hemin transport system permease protein HmuU (hmuU) (Yersinia pestis).